The sequence spans 360 residues: Phospho-N-acetylmuramoyl-pentapeptide-transferase (360 aa).

10 helical membrane-spanning segments follow: residues 25 to 45, 74 to 94, 97 to 117, 132 to 152, 168 to 188, 199 to 219, 236 to 256, 263 to 283, 288 to 308, and 338 to 358; these read RGIL…PWLI, MGGA…ADLA, YVWV…VDDY, WKYF…YMTA, IEIP…VGSS, GLAI…CYLS, SGEL…FLWF, VFMG…IAVI, VVLF…MIQV, and VIVR…ATLK.

It belongs to the glycosyltransferase 4 family. MraY subfamily. The cofactor is Mg(2+).

The protein localises to the cell inner membrane. The catalysed reaction is UDP-N-acetyl-alpha-D-muramoyl-L-alanyl-gamma-D-glutamyl-meso-2,6-diaminopimeloyl-D-alanyl-D-alanine + di-trans,octa-cis-undecaprenyl phosphate = di-trans,octa-cis-undecaprenyl diphospho-N-acetyl-alpha-D-muramoyl-L-alanyl-D-glutamyl-meso-2,6-diaminopimeloyl-D-alanyl-D-alanine + UMP. It functions in the pathway cell wall biogenesis; peptidoglycan biosynthesis. Catalyzes the initial step of the lipid cycle reactions in the biosynthesis of the cell wall peptidoglycan: transfers peptidoglycan precursor phospho-MurNAc-pentapeptide from UDP-MurNAc-pentapeptide onto the lipid carrier undecaprenyl phosphate, yielding undecaprenyl-pyrophosphoryl-MurNAc-pentapeptide, known as lipid I. The protein is Phospho-N-acetylmuramoyl-pentapeptide-transferase of Stutzerimonas stutzeri (strain A1501) (Pseudomonas stutzeri).